Here is a 300-residue protein sequence, read N- to C-terminus: Geranylgeranyl pyrophosphate synthase (300 aa).

Residue M1 is modified to N-acetylmethionine. Isopentenyl diphosphate-binding residues include K25, R28, and H57. Residues D64 and D68 each contribute to the Mg(2+) site. R73 is a dimethylallyl diphosphate binding site. R74 contributes to the isopentenyl diphosphate binding site. Positions 151, 152, 185, 202, and 212 each coordinate dimethylallyl diphosphate.

It belongs to the FPP/GGPP synthase family. As to quaternary structure, homohexamer; trimer of homodimers. Requires Mg(2+) as cofactor. As to expression, abundantly expressed in testis. Found in other tissues to a lower extent. Expressed in dermal fibroblast and skeletal muscle.

The protein resides in the cytoplasm. Its subcellular location is the perinuclear region. The protein localises to the myofibril. It is found in the sarcomere. It localises to the z line. The enzyme catalyses isopentenyl diphosphate + dimethylallyl diphosphate = (2E)-geranyl diphosphate + diphosphate. It catalyses the reaction isopentenyl diphosphate + (2E)-geranyl diphosphate = (2E,6E)-farnesyl diphosphate + diphosphate. It carries out the reaction isopentenyl diphosphate + (2E,6E)-farnesyl diphosphate = (2E,6E,10E)-geranylgeranyl diphosphate + diphosphate. Its pathway is isoprenoid biosynthesis; farnesyl diphosphate biosynthesis; farnesyl diphosphate from geranyl diphosphate and isopentenyl diphosphate: step 1/1. The protein operates within isoprenoid biosynthesis; geranyl diphosphate biosynthesis; geranyl diphosphate from dimethylallyl diphosphate and isopentenyl diphosphate: step 1/1. It functions in the pathway isoprenoid biosynthesis; geranylgeranyl diphosphate biosynthesis; geranylgeranyl diphosphate from farnesyl diphosphate and isopentenyl diphosphate: step 1/1. Subject to product inhibition by geranylgeranyl diphosphate. In terms of biological role, catalyzes the trans-addition of the three molecules of IPP onto DMAPP to form geranylgeranyl pyrophosphate, an important precursor of carotenoids and geranylated proteins. This chain is Geranylgeranyl pyrophosphate synthase (GGPS1), found in Homo sapiens (Human).